The sequence spans 459 residues: ATP synthase subunit beta 1 (459 aa).

148-155 is an ATP binding site; sequence GGAGVGKT.

The protein belongs to the ATPase alpha/beta chains family. As to quaternary structure, F-type ATPases have 2 components, CF(1) - the catalytic core - and CF(0) - the membrane proton channel. CF(1) has five subunits: alpha(3), beta(3), gamma(1), delta(1), epsilon(1). CF(0) has three main subunits: a(1), b(2) and c(9-12). The alpha and beta chains form an alternating ring which encloses part of the gamma chain. CF(1) is attached to CF(0) by a central stalk formed by the gamma and epsilon chains, while a peripheral stalk is formed by the delta and b chains.

It localises to the cell inner membrane. It carries out the reaction ATP + H2O + 4 H(+)(in) = ADP + phosphate + 5 H(+)(out). In terms of biological role, produces ATP from ADP in the presence of a proton gradient across the membrane. The catalytic sites are hosted primarily by the beta subunits. This is ATP synthase subunit beta 1 from Nitrosospira multiformis (strain ATCC 25196 / NCIMB 11849 / C 71).